A 409-amino-acid polypeptide reads, in one-letter code: Probable peptidoglycan glycosyltransferase FtsW (409 aa).

9 consecutive transmembrane segments (helical) span residues 42 to 62 (LFTL…SASL), 72 to 92 (PFHF…VMLA), 108 to 128 (LLLL…EVNG), 135 to 155 (VGPI…IYMA), 178 to 198 (LLFI…VVVL), 213 to 233 (LWQF…LIIV), 303 to 323 (FLGV…ALII), 337 to 357 (YLAY…IGVA), and 368 to 388 (LPLV…VGLL).

The protein belongs to the SEDS family. FtsW subfamily.

It localises to the cell inner membrane. It carries out the reaction [GlcNAc-(1-&gt;4)-Mur2Ac(oyl-L-Ala-gamma-D-Glu-L-Lys-D-Ala-D-Ala)](n)-di-trans,octa-cis-undecaprenyl diphosphate + beta-D-GlcNAc-(1-&gt;4)-Mur2Ac(oyl-L-Ala-gamma-D-Glu-L-Lys-D-Ala-D-Ala)-di-trans,octa-cis-undecaprenyl diphosphate = [GlcNAc-(1-&gt;4)-Mur2Ac(oyl-L-Ala-gamma-D-Glu-L-Lys-D-Ala-D-Ala)](n+1)-di-trans,octa-cis-undecaprenyl diphosphate + di-trans,octa-cis-undecaprenyl diphosphate + H(+). Its pathway is cell wall biogenesis; peptidoglycan biosynthesis. Peptidoglycan polymerase that is essential for cell division. The polypeptide is Probable peptidoglycan glycosyltransferase FtsW (Idiomarina loihiensis (strain ATCC BAA-735 / DSM 15497 / L2-TR)).